We begin with the raw amino-acid sequence, 141 residues long: Pancreatic progenitor cell differentiation and proliferation factor-like protein (141 aa).

A disordered region spans residues 72 to 141 (DQSACGGNGP…GAPKDTNSPQ (70 aa)). A compositionally biased stretch (low complexity) spans 95-105 (SLLQQEESQLL). Over residues 112–122 (GTVNRFRNSQT) the composition is skewed to polar residues.

Belongs to the PPDPF family.

This Bos taurus (Bovine) protein is Pancreatic progenitor cell differentiation and proliferation factor-like protein.